The primary structure comprises 320 residues: Phospho-N-acetylmuramoyl-pentapeptide-transferase (320 aa).

Transmembrane regions (helical) follow at residues 7-27 (ILAI…VIPF), 50-70 (GTPT…SLIF), 77-97 (IGAP…DDFI), 113-133 (LVLQ…HLGS), 148-168 (WAYV…VNLT), 173-193 (GLAS…SIFS), 198-216 (MAIF…LRYN), 221-241 (VVFM…AIAV), 247-267 (VLVL…MLQV), and 297-317 (VVVV…AMIQ).

The protein belongs to the glycosyltransferase 4 family. MraY subfamily. The cofactor is Mg(2+).

The protein resides in the cell membrane. The catalysed reaction is UDP-N-acetyl-alpha-D-muramoyl-L-alanyl-gamma-D-glutamyl-meso-2,6-diaminopimeloyl-D-alanyl-D-alanine + di-trans,octa-cis-undecaprenyl phosphate = di-trans,octa-cis-undecaprenyl diphospho-N-acetyl-alpha-D-muramoyl-L-alanyl-D-glutamyl-meso-2,6-diaminopimeloyl-D-alanyl-D-alanine + UMP. It participates in cell wall biogenesis; peptidoglycan biosynthesis. In terms of biological role, catalyzes the initial step of the lipid cycle reactions in the biosynthesis of the cell wall peptidoglycan: transfers peptidoglycan precursor phospho-MurNAc-pentapeptide from UDP-MurNAc-pentapeptide onto the lipid carrier undecaprenyl phosphate, yielding undecaprenyl-pyrophosphoryl-MurNAc-pentapeptide, known as lipid I. This Caldicellulosiruptor bescii (strain ATCC BAA-1888 / DSM 6725 / KCTC 15123 / Z-1320) (Anaerocellum thermophilum) protein is Phospho-N-acetylmuramoyl-pentapeptide-transferase.